The following is a 428-amino-acid chain: Serine--tRNA ligase (428 aa).

235–237 is a binding site for L-serine; that stretch reads TAE. 266 to 268 contributes to the ATP binding site; that stretch reads RSE. Residue Glu-289 participates in L-serine binding. Residue 353–356 participates in ATP binding; the sequence is EISS. Ser-389 lines the L-serine pocket.

The protein belongs to the class-II aminoacyl-tRNA synthetase family. Type-1 seryl-tRNA synthetase subfamily. As to quaternary structure, homodimer. The tRNA molecule binds across the dimer.

It localises to the cytoplasm. The catalysed reaction is tRNA(Ser) + L-serine + ATP = L-seryl-tRNA(Ser) + AMP + diphosphate + H(+). The enzyme catalyses tRNA(Sec) + L-serine + ATP = L-seryl-tRNA(Sec) + AMP + diphosphate + H(+). It functions in the pathway aminoacyl-tRNA biosynthesis; selenocysteinyl-tRNA(Sec) biosynthesis; L-seryl-tRNA(Sec) from L-serine and tRNA(Sec): step 1/1. In terms of biological role, catalyzes the attachment of serine to tRNA(Ser). Is also able to aminoacylate tRNA(Sec) with serine, to form the misacylated tRNA L-seryl-tRNA(Sec), which will be further converted into selenocysteinyl-tRNA(Sec). The polypeptide is Serine--tRNA ligase (Shewanella baltica (strain OS223)).